The chain runs to 202 residues: Peptide methionine sulfoxide reductase B2, chloroplastic (202 aa).

The transit peptide at 1 to 63 directs the protein to the chloroplast; sequence MAFNIITPGR…RRGFHGGRIV (63 aa). The 122-residue stretch at 77 to 198 folds into the MsrB domain; it reads EEEWRAILSP…NSISLKFTPE (122 aa). 4 residues coordinate Zn(2+): Cys116, Cys119, Cys162, and Cys165. An intrachain disulfide couples Cys134 to Cys187. The active-site Nucleophile is Cys187.

This sequence belongs to the MsrB Met sulfoxide reductase family. It depends on Zn(2+) as a cofactor. As to expression, expressed in stems, young leaves, floral buds and flowers. Expressed at low levels in roots, mature leaves and siliques (at protein level).

The protein resides in the plastid. It is found in the chloroplast. It catalyses the reaction L-methionyl-[protein] + [thioredoxin]-disulfide + H2O = L-methionyl-(R)-S-oxide-[protein] + [thioredoxin]-dithiol. Catalyzes the reduction of methionine sulfoxide (MetSO) to methionine in proteins. Specifically reduces the MetSO R-enantiomer. Plays a protective role against oxidative stress by restoring activity to proteins that have been inactivated by methionine oxidation. May play an essential function in association with MSRB1 in maintaining vegetative growth during environmental constraints, through the preservation of photosynthetic antennae. MSRB1 and MSRB2 account for most of the leaf peptide MSR capacity. The sequence is that of Peptide methionine sulfoxide reductase B2, chloroplastic from Arabidopsis thaliana (Mouse-ear cress).